Reading from the N-terminus, the 301-residue chain is Ribosomal RNA small subunit methyltransferase A (301 aa).

Positions 23, 25, 50, 72, 97, and 149 each coordinate S-adenosyl-L-methionine.

Belongs to the class I-like SAM-binding methyltransferase superfamily. rRNA adenine N(6)-methyltransferase family. RsmA subfamily.

It localises to the cytoplasm. It carries out the reaction adenosine(1518)/adenosine(1519) in 16S rRNA + 4 S-adenosyl-L-methionine = N(6)-dimethyladenosine(1518)/N(6)-dimethyladenosine(1519) in 16S rRNA + 4 S-adenosyl-L-homocysteine + 4 H(+). Specifically dimethylates two adjacent adenosines (A1518 and A1519) in the loop of a conserved hairpin near the 3'-end of 16S rRNA in the 30S particle. May play a critical role in biogenesis of 30S subunits. The sequence is that of Ribosomal RNA small subunit methyltransferase A from Rickettsia conorii (strain ATCC VR-613 / Malish 7).